The chain runs to 206 residues: Protein Nef (206 aa).

A lipid anchor (N-myristoyl glycine; by host) is attached at glycine 2. Serine 6 bears the Phosphoserine; by host mark. Positions 62–65 (EEEE) are acidic; interacts with host PACS1 and PACS2; stabilizes the interaction of NEF/MHC-I with host AP1M1; necessary for MHC-I internalization. The segment at 69–78 (PVTPQVPLRP) is SH3-binding; interaction with Src family tyrosine kinases. Positions 72–75 (PQVP) match the PxxP; stabilizes the interaction of NEF/MHC-I with host AP1M1; necessary for MHC-I internalization motif. The tract at residues 108–124 (DILDLWIYHTQGYFPDW) is mediates dimerization, Nef-PTE1 interaction. The interval 108–124 (DILDLWIYHTQGYFPDW) is mediates dimerization, Nef-PTE1 interaction, Nef-induced CD4 and MHC-I down-regulation and enhancement of infectivity. Residues 148–180 (VEPDKVEEANKGENTSLLHPVSLHGMDDPEREV) are binding to ATP6V1H. The Dileucine internalization motif; necessary for CD4 internalization motif lies at 164–165 (LL). The Diacidic; necessary for CD4 internalization signature appears at 174 to 175 (DD).

The protein belongs to the lentivirus primate group Nef protein family. Monomer; cytosolic form. Homodimer; membrane bound form. Interacts with Nef associated p21-activated kinase (PAK2); this interaction activates PAK2. Associates with the Nef-MHC-I-AP1 complex; this complex is required for MHC-I internalization. Interacts (via C-terminus) with host PI3-kinase. Interacts with host PACS1; this interaction seems to be weak. Interacts with host PACS2. Interacts with host LCK and MAPK3; these interactions inhibit the kinase activity of the latter. Interacts with host ATP6V1H; this interaction may play a role in CD4 endocytosis. Associates with the CD4-Nef-AP2 complex; this complex is required for CD4 internalization. Interacts with host AP2 subunit alpha and AP2 subunit sigma2. Interacts with TCR-zeta chain; this interaction up-regulates the Fas ligand (FasL) surface expression. Interacts with host HCK, LYN, and SRC; these interactions activate the Src family kinases. Interacts with MAP3K5; this interaction inhibits the Fas and TNFR-mediated death signals. Interacts with beta-COP and PTE1. Interacts with human RACK1; this increases Nef phosphorylation by PKC. Interacts with TP53; this interaction decreases the half-life of TP53, protecting the infected cell against p53-mediated apoptosis. Post-translationally, the virion-associated Nef proteins are cleaved by the viral protease to release the soluble C-terminal core protein. Nef is probably cleaved concomitantly with viral structural proteins on maturation of virus particles. Myristoylated. In terms of processing, phosphorylated on serine residues, probably by host PKCdelta and theta.

It localises to the host cell membrane. It is found in the virion. The protein localises to the secreted. The protein resides in the host Golgi apparatus membrane. Factor of infectivity and pathogenicity, required for optimal virus replication. Alters numerous pathways of T-lymphocytes function and down-regulates immunity surface molecules in order to evade host defense and increase viral infectivity. Alters the functionality of other immunity cells, like dendritic cells, monocytes/macrophages and NK cells. In terms of biological role, in infected CD4(+) T-lymphocytes, down-regulates the surface MHC-I, mature MHC-II, CD4, CD28, CCR5 and CXCR4 molecules. Mediates internalization and degradation of host CD4 through the interaction of with the cytoplasmic tail of CD4, the recruitment of AP-2 (clathrin adapter protein complex 2), internalization through clathrin coated pits, and subsequent transport to endosomes and lysosomes for degradation. Diverts host MHC-I molecules to the trans-Golgi network-associated endosomal compartments by an endocytic pathway to finally target them for degradation. MHC-I down-regulation may involve AP-1 (clathrin adapter protein complex 1) or possibly Src family kinase-ZAP70/Syk-PI3K cascade recruited by PACS2. In consequence infected cells are masked for immune recognition by cytotoxic T-lymphocytes. Decreasing the number of immune receptors also prevents reinfection by more HIV particles (superinfection). Down-regulates host SERINC3 and SERINC5 thereby excluding these proteins from the viral particles. Virion infectivity is drastically higher when SERINC3 or SERINC5 are excluded from the viral envelope, because these host antiviral proteins impair the membrane fusion event necessary for subsequent virion penetration. Its function is as follows. Bypasses host T-cell signaling by inducing a transcriptional program nearly identical to that of anti-CD3 cell activation. Interaction with TCR-zeta chain up-regulates the Fas ligand (FasL). Increasing surface FasL molecules and decreasing surface MHC-I molecules on infected CD4(+) cells send attacking cytotoxic CD8+ T-lymphocytes into apoptosis. Functionally, plays a role in optimizing the host cell environment for viral replication without causing cell death by apoptosis. Protects the infected cells from apoptosis in order to keep them alive until the next virus generation is ready to strike. Inhibits the Fas and TNFR-mediated death signals by blocking MAP3K5/ASK1. Decreases the half-life of TP53, protecting the infected cell against p53-mediated apoptosis. Inhibits the apoptotic signals regulated by the Bcl-2 family proteins through the formation of a Nef/PI3-kinase/PAK2 complex that leads to activation of PAK2 and induces phosphorylation of host BAD. Extracellular Nef protein targets CD4(+) T-lymphocytes for apoptosis by interacting with CXCR4 surface receptors. In Homo sapiens (Human), this protein is Protein Nef.